The chain runs to 296 residues: Arginase (296 aa).

Mn(2+) contacts are provided by H97, D120, H122, and D124. Residues H122–N126, S133–N135, and D176 contribute to the substrate site. The Mn(2+) site is built by D223 and D225. Residues T237 and E268 each coordinate substrate.

Belongs to the arginase family. The cofactor is Mn(2+).

It catalyses the reaction L-arginine + H2O = urea + L-ornithine. It functions in the pathway nitrogen metabolism; urea cycle; L-ornithine and urea from L-arginine: step 1/1. Involved in the catabolism of arginine. This chain is Arginase, found in Bacillus subtilis (strain 168).